Consider the following 331-residue polypeptide: Vitamin B12 import system permease protein BtuC (331 aa).

9 helical membrane passes run 20 to 42 (IMSV…FLSP), 62 to 84 (LVAA…VLLG), 91 to 113 (GVLG…LPVL), 118 to 140 (IFML…IARA), 147 to 169 (RLLL…AFYF), 189 to 208 (ASWY…VWLC), 240 to 262 (LAIS…VGLV), 277 to 299 (YLLP…GARL), and 306 to 325 (LPLG…WMLV).

The protein belongs to the binding-protein-dependent transport system permease family. FecCD subfamily. As to quaternary structure, the complex is composed of two ATP-binding proteins (BtuD), two transmembrane proteins (BtuC) and a solute-binding protein (BtuF).

It is found in the cell inner membrane. Its function is as follows. Part of the ABC transporter complex BtuCDF involved in vitamin B12 import. Involved in the translocation of the substrate across the membrane. The protein is Vitamin B12 import system permease protein BtuC of Vibrio parahaemolyticus serotype O3:K6 (strain RIMD 2210633).